The sequence spans 147 residues: MKTFVPKNNEQNWVVVDAAGVPLGRLATLVASRIRGKHRPDFTPNIIQGDFVVVVNAEKVVLTGNKLDGKVYTRYTGYQGGLKTETARQALAKHPERVIEHAVFGMLPKGRQGRALHSRLKVYAGTTHPHAAQKPQQLEVRTALEVK.

This sequence belongs to the universal ribosomal protein uL13 family. As to quaternary structure, part of the 50S ribosomal subunit.

In terms of biological role, this protein is one of the early assembly proteins of the 50S ribosomal subunit, although it is not seen to bind rRNA by itself. It is important during the early stages of 50S assembly. The protein is Large ribosomal subunit protein uL13 of Deinococcus geothermalis (strain DSM 11300 / CIP 105573 / AG-3a).